Here is a 32-residue protein sequence, read N- to C-terminus: Zinc metalloproteinase/disintegrin-like CdtV1 (32 aa).

2 disulfide bridges follow: C5–C14 and C7–C15.

The protein belongs to the venom metalloproteinase (M12B) family. P-II subfamily. P-IIa sub-subfamily. As to quaternary structure, monomer. In terms of tissue distribution, expressed by the venom gland.

It localises to the secreted. Its function is as follows. Snake venom metalloproteinase that impairs hemostasis in the envenomed animal. The sequence is that of Zinc metalloproteinase/disintegrin-like CdtV1 from Crotalus durissus terrificus (South American rattlesnake).